Here is an 842-residue protein sequence, read N- to C-terminus: Probable vinculin (842 aa).

Residues 585-679 are a coiled coil; it reads KEARKRLDDV…AAEEEERKRA (95 aa).

The protein belongs to the vinculin/alpha-catenin family. As to quaternary structure, monomer. Associates with F-actin. Interacts with aarA, ctxA, ctxB and rgaA. As to expression, epithelium.

It is found in the cytoplasm. The protein resides in the cell cortex. Its subcellular location is the cell junction. Its function is as follows. Involved in cell adhesion. Thought to play an important role in cytokinesis B, probably by providing substrate adhesion and traction forces. Required to organize and polarize the tip epithelium during cytokinesis. Required for the normal distribution of myosin in the tip epithelium. Involved in the localization of ctxA, ctxB, dcsA, exoc6 and rgaA. Thought to form a complex with ctxA, ctxB, and rgaA which regulates myosin accumulation to the apical plasma membrane. In Dictyostelium discoideum (Social amoeba), this protein is Probable vinculin (ctnnA).